The chain runs to 102 residues: Large ribosomal subunit protein uL24 (102 aa).

This sequence belongs to the universal ribosomal protein uL24 family. In terms of assembly, part of the 50S ribosomal subunit.

One of two assembly initiator proteins, it binds directly to the 5'-end of the 23S rRNA, where it nucleates assembly of the 50S subunit. In terms of biological role, one of the proteins that surrounds the polypeptide exit tunnel on the outside of the subunit. In Burkholderia mallei (strain NCTC 10229), this protein is Large ribosomal subunit protein uL24.